The sequence spans 356 residues: D-xylulose reductase (356 aa).

Zn(2+) is bound by residues Cys-44, His-69, and Glu-155. 179–184 contacts NAD(+); it reads GAGPIG.

Belongs to the zinc-containing alcohol dehydrogenase family. It depends on Zn(2+) as a cofactor.

It catalyses the reaction xylitol + NAD(+) = D-xylulose + NADH + H(+). It participates in carbohydrate degradation; L-arabinose degradation via L-arabinitol; D-xylulose 5-phosphate from L-arabinose (fungal route): step 4/5. The polypeptide is D-xylulose reductase (XYL2) (Saccharomyces cerevisiae (strain ATCC 204508 / S288c) (Baker's yeast)).